The chain runs to 177 residues: Secretion monitor (177 aa).

An N-terminal signal peptide occupies residues 1 to 37 (MIGILNRWRQFGRRYFWPHLLLGMVAASLGVPLNLSG).

This sequence belongs to the SecM family.

The protein localises to the cytoplasm. Its subcellular location is the cytosol. The protein resides in the periplasm. In terms of biological role, regulates secA expression by translational coupling of the secM secA operon. Translational pausing at a specific Pro residue 5 residues before the end of the protein may allow disruption of a mRNA repressor helix that normally suppresses secA translation initiation. The sequence is that of Secretion monitor from Yersinia pestis bv. Antiqua (strain Antiqua).